A 375-amino-acid chain; its full sequence is Queuine tRNA-ribosyltransferase (375 aa).

D90 functions as the Proton acceptor in the catalytic mechanism. Substrate contacts are provided by residues 90–94 (DSGGF), D144, Q190, and G217. The RNA binding stretch occupies residues 248 to 254 (GIGTPHY). D267 (nucleophile) is an active-site residue. The RNA binding; important for wobble base 34 recognition stretch occupies residues 272–276 (ARITR). Zn(2+)-binding residues include C305, C307, C310, and H336.

The protein belongs to the queuine tRNA-ribosyltransferase family. As to quaternary structure, homodimer. Within each dimer, one monomer is responsible for RNA recognition and catalysis, while the other monomer binds to the replacement base PreQ1. It depends on Zn(2+) as a cofactor.

It carries out the reaction 7-aminomethyl-7-carbaguanine + guanosine(34) in tRNA = 7-aminomethyl-7-carbaguanosine(34) in tRNA + guanine. Its pathway is tRNA modification; tRNA-queuosine biosynthesis. In terms of biological role, catalyzes the base-exchange of a guanine (G) residue with the queuine precursor 7-aminomethyl-7-deazaguanine (PreQ1) at position 34 (anticodon wobble position) in tRNAs with GU(N) anticodons (tRNA-Asp, -Asn, -His and -Tyr). Catalysis occurs through a double-displacement mechanism. The nucleophile active site attacks the C1' of nucleotide 34 to detach the guanine base from the RNA, forming a covalent enzyme-RNA intermediate. The proton acceptor active site deprotonates the incoming PreQ1, allowing a nucleophilic attack on the C1' of the ribose to form the product. After dissociation, two additional enzymatic reactions on the tRNA convert PreQ1 to queuine (Q), resulting in the hypermodified nucleoside queuosine (7-(((4,5-cis-dihydroxy-2-cyclopenten-1-yl)amino)methyl)-7-deazaguanosine). The polypeptide is Queuine tRNA-ribosyltransferase (Borreliella burgdorferi (strain ZS7) (Borrelia burgdorferi)).